Reading from the N-terminus, the 659-residue chain is Cytochrome bo(3) ubiquinol oxidase subunit 1 (659 aa).

Over 1–14 the chain is Extracellular; it reads MFGKLSLNSIPYHD. Residues 15-35 form a helical membrane-spanning segment; it reads PIIMITCCVVILVFLVISIII. Residues 36 to 56 are Cytoplasmic-facing; it reads TIAQKWQYLWNEWCCTVDHKK. The chain crosses the membrane as a helical span at residues 57 to 77; the sequence is IAKMYIFLAFIMLFRGFADAI. Positions 71, 75, and 101 each coordinate a ubiquinone. Residues 78-109 lie on the Extracellular side of the membrane; that stretch reads MMRMQQFLVSSYHGNGTGFLPPHHYDQIFTAH. Position 109 (His-109) interacts with heme b. A helical transmembrane segment spans residues 110–130; sequence GVIMIFFVAMPLVIGLMNFVV. The Cytoplasmic segment spans residues 131-148; it reads PLQIGSRDVAFPFLNNLS. The helical transmembrane segment at 149-169 threads the bilayer; it reads LWLTIFSALLMNVSLGIGEFA. Residues 170 to 192 lie on the Extracellular side of the membrane; the sequence is QTGWLAYPPLSELQYSPGVGVDY. Trp-173 serves as a coordination point for heme b. Residues 193–213 form a helical membrane-spanning segment; sequence WIWSLQISGIGTTLTAINFLV. Residues 214 to 235 lie on the Cytoplasmic side of the membrane; that stretch reads TIIKMRSSGMNWFKIPVFTWTS. A helical transmembrane segment spans residues 236–256; that stretch reads FCTNILIIASFPVLTVSLLLL. Residues 257–280 are Extracellular-facing; sequence TLDRYLGFHFFTNDFGGNMMMYVN. A helical transmembrane segment spans residues 281–301; it reads LIWIWGHPEVYILILPVFGIF. A Cu(2+)-binding site is contributed by His-287. Residues 287-291 constitute a cross-link (1'-histidyl-3'-tyrosine (His-Tyr)); the sequence is HPEVY. Tyr-291 contributes to the Fe(II)-heme o binding site. Over 302–318 the chain is Cytoplasmic; sequence SEVVATFSSKELFGYTS. A helical transmembrane segment spans residues 319-339; that stretch reads LIWATIVITILSFIVWLHHFF. Residues His-336 and His-337 each coordinate Cu(2+). Residues 340 to 350 are Extracellular-facing; it reads TMGASANVNAF. Residues 351–371 form a helical membrane-spanning segment; the sequence is FGITTMIISIPTGVKIFNWLF. Over 372–382 the chain is Cytoplasmic; that stretch reads TMYRGNVRINS. The helical transmembrane segment at 383–403 threads the bilayer; it reads IMLWTIGFLITFSIGGMAGVL. Topologically, residues 404–416 are extracellular; the sequence is LSLPVIDFSLHNS. Residues His-414 and His-422 each coordinate Fe(II)-heme o. Residues 417–437 form a helical membrane-spanning segment; sequence LFLVAHFHNVIIGGVVFGCFA. Heme b is bound at residue His-424. Residues 438-459 lie on the Cytoplasmic side of the membrane; sequence GITYWFPKLFGFMLSEKWGKRA. A helical membrane pass occupies residues 460–480; the sequence is FWCWFFGFFCAFMPLYALGLM. At 481–499 the chain is on the extracellular side; that stretch reads GMTRRLSQNINPQFHSMLT. The heme b site is built by Arg-484 and Arg-485. A helical membrane pass occupies residues 500 to 520; the sequence is IAALGTILIFIGIVFQIIQIF. Residues 521–587 lie on the Cytoplasmic side of the membrane; sequence VSIRDRNLNR…KLPILYTSFH (67 aa). A helical membrane pass occupies residues 588 to 608; the sequence is MPKNTKFGFLIGFFAFLLGFS. Ala-609 is a topological domain (extracellular). A helical membrane pass occupies residues 610–630; sequence VWYIFWLFFISFFVIIYLLVI. Topologically, residues 631 to 659 are cytoplasmic; sequence KSLDTNCDYIISIEEIKEIEKCINIKKMD.

Belongs to the heme-copper respiratory oxidase family. The cytochrome bo(3) ubiquinol oxidase complex is a heterooctamer of two A chains, two B chains, two C chains and two D chains. Cu(2+) is required as a cofactor. The cofactor is heme b. Fe(II)-heme o serves as cofactor.

It is found in the cell membrane. The catalysed reaction is 2 a ubiquinol + O2 + n H(+)(in) = 2 a ubiquinone + 2 H2O + n H(+)(out). In terms of biological role, cytochrome bo(3) ubiquinol oxidase is the terminal enzyme in the aerobic respiratory chain. Catalyzes the four-electron reduction of O2 to water, using a ubiquinol as a membrane soluble electron donor for molecular oxygen reduction. Has proton pump activity across the membrane in addition to electron transfer, pumping 2 protons/electron and generating a proton motive force. All the redox centers of this enzyme complex are located within the largest subunit, subunit I. Protons are probably pumped via D- and K- channels found in this subunit. In Buchnera aphidicola subsp. Baizongia pistaciae (strain Bp), this protein is Cytochrome bo(3) ubiquinol oxidase subunit 1 (cyoB).